The primary structure comprises 228 residues: Cytochrome c oxidase subunit 2 (228 aa).

The Mitochondrial intermembrane portion of the chain corresponds to 1–14 (MPHASQLSLQEAMG). The helical transmembrane segment at 15 to 45 (PTMEEVIFLHDHVLLLTCLMTMVITMFTLTA) threads the bilayer. Topologically, residues 46 to 59 (TTTALTHNDPTEEV) are mitochondrial matrix. The helical transmembrane segment at 60-87 (EQLEAAWTVAPIMILILTALPSVRSLYL) threads the bilayer. The Mitochondrial intermembrane segment spans residues 88–228 (MEEVFNPYLT…HFEQWLISEQ (141 aa)). Positions 162, 197, 199, 201, 205, and 208 each coordinate Cu cation. Glutamate 199 contacts Mg(2+).

The protein belongs to the cytochrome c oxidase subunit 2 family. In terms of assembly, component of the cytochrome c oxidase (complex IV, CIV), a multisubunit enzyme composed of 14 subunits. The complex is composed of a catalytic core of 3 subunits MT-CO1, MT-CO2 and MT-CO3, encoded in the mitochondrial DNA, and 11 supernumerary subunits COX4I, COX5A, COX5B, COX6A, COX6B, COX6C, COX7A, COX7B, COX7C, COX8 and NDUFA4, which are encoded in the nuclear genome. The complex exists as a monomer or a dimer and forms supercomplexes (SCs) in the inner mitochondrial membrane with NADH-ubiquinone oxidoreductase (complex I, CI) and ubiquinol-cytochrome c oxidoreductase (cytochrome b-c1 complex, complex III, CIII), resulting in different assemblies (supercomplex SCI(1)III(2)IV(1) and megacomplex MCI(2)III(2)IV(2)). Found in a complex with TMEM177, COA6, COX18, COX20, SCO1 and SCO2. Interacts with TMEM177 in a COX20-dependent manner. Interacts with COX20. Interacts with COX16. Requires Cu cation as cofactor.

Its subcellular location is the mitochondrion inner membrane. It catalyses the reaction 4 Fe(II)-[cytochrome c] + O2 + 8 H(+)(in) = 4 Fe(III)-[cytochrome c] + 2 H2O + 4 H(+)(out). Component of the cytochrome c oxidase, the last enzyme in the mitochondrial electron transport chain which drives oxidative phosphorylation. The respiratory chain contains 3 multisubunit complexes succinate dehydrogenase (complex II, CII), ubiquinol-cytochrome c oxidoreductase (cytochrome b-c1 complex, complex III, CIII) and cytochrome c oxidase (complex IV, CIV), that cooperate to transfer electrons derived from NADH and succinate to molecular oxygen, creating an electrochemical gradient over the inner membrane that drives transmembrane transport and the ATP synthase. Cytochrome c oxidase is the component of the respiratory chain that catalyzes the reduction of oxygen to water. Electrons originating from reduced cytochrome c in the intermembrane space (IMS) are transferred via the dinuclear copper A center (CU(A)) of subunit 2 and heme A of subunit 1 to the active site in subunit 1, a binuclear center (BNC) formed by heme A3 and copper B (CU(B)). The BNC reduces molecular oxygen to 2 water molecules using 4 electrons from cytochrome c in the IMS and 4 protons from the mitochondrial matrix. The polypeptide is Cytochrome c oxidase subunit 2 (MT-CO2) (Lycodon semicarinatus (Ryukyu odd-tooth snake)).